The sequence spans 244 residues: Probable septum site-determining protein MinC (244 aa).

Belongs to the MinC family. As to quaternary structure, interacts with MinD and FtsZ.

In terms of biological role, cell division inhibitor that blocks the formation of polar Z ring septums. Rapidly oscillates between the poles of the cell to destabilize FtsZ filaments that have formed before they mature into polar Z rings. Prevents FtsZ polymerization. The polypeptide is Probable septum site-determining protein MinC (Dichelobacter nodosus (strain VCS1703A)).